Reading from the N-terminus, the 197-residue chain is Probable GTP-binding protein EngB (197 aa).

The region spanning 22-197 (TGVEVAFAGR…FKEKLDTWYQ (176 aa)) is the EngB-type G domain. GTP-binding positions include 30–37 (GRSNAGKS), 57–61 (GRTQL), 75–78 (DLPG), 142–145 (TKAD), and 177–179 (FSS). Mg(2+) is bound by residues serine 37 and threonine 59.

Belongs to the TRAFAC class TrmE-Era-EngA-EngB-Septin-like GTPase superfamily. EngB GTPase family. Requires Mg(2+) as cofactor.

Functionally, necessary for normal cell division and for the maintenance of normal septation. The sequence is that of Probable GTP-binding protein EngB from Francisella tularensis subsp. tularensis (strain FSC 198).